The following is a 373-amino-acid chain: tRNA-specific 2-thiouridylase MnmA (373 aa).

Residues 12–19 and methionine 38 each bind ATP; that span reads GMSGGVDS. The interaction with target base in tRNA stretch occupies residues 98–100; it reads NPD. The active-site Nucleophile is cysteine 103. Residues cysteine 103 and cysteine 200 are joined by a disulfide bond. Glycine 127 lines the ATP pocket. The interaction with tRNA stretch occupies residues 150–152; it reads KDQ. The active-site Cysteine persulfide intermediate is cysteine 200. The tract at residues 312-313 is interaction with tRNA; the sequence is RY.

It belongs to the MnmA/TRMU family.

Its subcellular location is the cytoplasm. It carries out the reaction S-sulfanyl-L-cysteinyl-[protein] + uridine(34) in tRNA + AH2 + ATP = 2-thiouridine(34) in tRNA + L-cysteinyl-[protein] + A + AMP + diphosphate + H(+). Its function is as follows. Catalyzes the 2-thiolation of uridine at the wobble position (U34) of tRNA, leading to the formation of s(2)U34. In Streptococcus pneumoniae (strain P1031), this protein is tRNA-specific 2-thiouridylase MnmA.